A 443-amino-acid chain; its full sequence is Glucose-6-phosphate isomerase (443 aa).

E285 serves as the catalytic Proton donor. Active-site residues include H306 and K420.

This sequence belongs to the GPI family.

The protein localises to the cytoplasm. It carries out the reaction alpha-D-glucose 6-phosphate = beta-D-fructose 6-phosphate. Its pathway is carbohydrate biosynthesis; gluconeogenesis. The protein operates within carbohydrate degradation; glycolysis; D-glyceraldehyde 3-phosphate and glycerone phosphate from D-glucose: step 2/4. Catalyzes the reversible isomerization of glucose-6-phosphate to fructose-6-phosphate. This chain is Glucose-6-phosphate isomerase, found in Staphylococcus aureus (strain USA300).